Reading from the N-terminus, the 103-residue chain is MIPGEILFADEPVAFNEGREAVRLTVLNTADRPVQVGSHYHFAEANPGLEFDRAAAHGRRLDIAAGTAVRFEPGIPVDVRLIPLAGARVVVGLRGATGGALDA.

The protein belongs to the urease beta subunit family. In terms of assembly, heterotrimer of UreA (gamma), UreB (beta) and UreC (alpha) subunits. Three heterotrimers associate to form the active enzyme.

The protein resides in the cytoplasm. The enzyme catalyses urea + 2 H2O + H(+) = hydrogencarbonate + 2 NH4(+). The protein operates within nitrogen metabolism; urea degradation; CO(2) and NH(3) from urea (urease route): step 1/1. The chain is Urease subunit beta from Streptomyces coelicolor (strain ATCC BAA-471 / A3(2) / M145).